Consider the following 375-residue polypeptide: N-acetyldiaminopimelate deacetylase (375 aa).

Asp-69 is an active-site residue. Glu-128 serves as the catalytic Proton acceptor.

This sequence belongs to the peptidase M20A family. N-acetyldiaminopimelate deacetylase subfamily.

The catalysed reaction is N-acetyl-(2S,6S)-2,6-diaminopimelate + H2O = (2S,6S)-2,6-diaminopimelate + acetate. It functions in the pathway amino-acid biosynthesis; L-lysine biosynthesis via DAP pathway; LL-2,6-diaminopimelate from (S)-tetrahydrodipicolinate (acetylase route): step 3/3. Functionally, catalyzes the conversion of N-acetyl-diaminopimelate to diaminopimelate and acetate. The chain is N-acetyldiaminopimelate deacetylase from Priestia megaterium (strain ATCC 12872 / QMB1551) (Bacillus megaterium).